Reading from the N-terminus, the 559-residue chain is Formate--tetrahydrofolate ligase (559 aa).

68–75 contacts ATP; it reads TPAGEGKT.

It belongs to the formate--tetrahydrofolate ligase family. In terms of assembly, homotetramer.

The enzyme catalyses (6S)-5,6,7,8-tetrahydrofolate + formate + ATP = (6R)-10-formyltetrahydrofolate + ADP + phosphate. The protein operates within one-carbon metabolism; tetrahydrofolate interconversion. This chain is Formate--tetrahydrofolate ligase, found in Moorella thermoacetica (Clostridium thermoaceticum).